The sequence spans 837 residues: MEPAVGGPGPLIVNNKQPQPPPPPPPAAAQPPPGAPRAAAGLLPGGKAREFNRNQRKDSEGYSESPDLEFEYADTDKWAAELSELYSYTEGPEFLMNRKCFEEDFRIHVTDKKWTELDTNQHRTHAMRLLDGLEVTAREKRLKVARAILYVAQGTFGECSSEAEVQSWMRYNIFLLLEVGTFNALVELLNMEIDNSAACSSAVRKPAISLADSTDLRVLLNIMYLIVETVHQECEGDKAEWRTMRQTFRAELGSPLYNNEPFAIMLFGMVTKFCSGHAPHFPMKKVLLLLWKTVLCTLGGFEELQSMKAEKRSILGLPPLPEDSIKVIRNMRAASPPASASDLIEQQQKRGRREHKALIKQDNLDAFNERDPYKADDSREEEEENDDDNSLEGETFPLERDEVMPPPLQHPQTDRLTCPKGLPWAPKVREKDIEMFLESSRSKFIGYTLGSDTNTVVGLPRPIHESIKTLKQHKYTSIAEVQAQMEEEYLRSPLSGGEEEVEQVPAETLYQGLLPSLPQYMIALLKILLAAAPTSKAKTDSINILADVLPEEMPTTVLQSMKLGVDVNRHKEVIVKAISAVLLLLLKHFKLNHVYQFEYMAQHLVFANCIPLILKFFNQNIMSYITAKNSISVLDYPHCVVHELPELTAESLEAGDSNQFCWRNLFSCINLLRILNKLTKWKHSRTMMLVVFKSAPILKRALKVKQAMMQLYVLKLLKVQTKYLGRQWRKSNMKTMSAIYQKVRHRLNDDWAYGNDLDARPWDFQAEECALRANIERFNARRYDRAHSNPDFLPVDNCLQSVLGQRVDLPEDFQMNYDLWLEREVFSKPISWEELLQ.

Methionine 1 is modified (N-acetylmethionine). 2 disordered regions span residues 1–67 (MEPA…ESPD) and 333–423 (AASP…KGLP). Positions 18–35 (PQPPPPPPPAAAQPPPGA) are enriched in pro residues. Residues 36-46 (PRAAAGLLPGG) show a composition bias toward low complexity. Residues 47–60 (KAREFNRNQRKDSE) are compositionally biased toward basic and acidic residues. Serine 59, serine 335, and serine 339 each carry phosphoserine. Over residues 356–377 (KALIKQDNLDAFNERDPYKADD) the composition is skewed to basic and acidic residues. The segment covering 378-391 (SREEEEENDDDNSL) has biased composition (acidic residues). Serine 788 carries the post-translational modification Phosphoserine. The segment at 796–837 (DNCLQSVLGQRVDLPEDFQMNYDLWLEREVFSKPISWEELLQ) is required for STRIPAK core complex formation.

The protein belongs to the STRIP family. As to quaternary structure, part of the core of STRIPAK complexes composed of PP2A catalytic and scaffolding subunits, the striatins (PP2A regulatory subunits), the striatin-associated proteins MOB4, STRIP1 and STRIP2, PDCD10 and members of the STE20 kinases, such as STK24 and STK26. The STRIPAK complex can be extended by adapter proteins such as SLMAP:SIKE1, CTTNBP2 or CTTNBP2NL. Interacts with CDC42BPB. Interacts with CTTNBP2NL.

It localises to the cytoplasm. In terms of biological role, plays a role in the regulation of cell morphology and cytoskeletal organization. Required in the cortical actin filament dynamics and cell shape. Part of the striatin-interacting phosphatase and kinase (STRIPAK) complexes. STRIPAK complexes have critical roles in protein (de)phosphorylation and are regulators of multiple signaling pathways including Hippo, MAPK, nuclear receptor and cytoskeleton remodeling. Different types of STRIPAK complexes are involved in a variety of biological processes such as cell growth, differentiation, apoptosis, metabolism and immune regulation. The sequence is that of Striatin-interacting protein 1 from Homo sapiens (Human).